Consider the following 463-residue polypeptide: Probable cysteine protease RD21B (463 aa).

A signal peptide spans methionine 1 to alanine 21. The propeptide at methionine 22–alanine 137 is activation peptide. Residue asparagine 92 is glycosylated (N-linked (GlcNAc...) asparagine). 5 disulfides stabilise this stretch: cysteine 159–cysteine 201, cysteine 193–cysteine 234, cysteine 292–cysteine 343, cysteine 376–cysteine 388, and cysteine 382–cysteine 403. Cysteine 162 is an active-site residue. Active-site residues include histidine 298 and asparagine 318. The propeptide at lysine 354–alanine 463 is removed in mature form. Asparagine 415 is a glycosylation site (N-linked (GlcNAc...) asparagine).

It belongs to the peptidase C1 family. Interacts with PRN2. Interacts with WSCP.

Its function is as follows. Probable thiol protease. In Arabidopsis thaliana (Mouse-ear cress), this protein is Probable cysteine protease RD21B.